A 228-amino-acid polypeptide reads, in one-letter code: L-ribulose-5-phosphate 4-epimerase UlaF (228 aa).

Residues 26 to 27, 43 to 44, and 72 to 73 contribute to the substrate site; these read GN, SG, and SS. 3 residues coordinate Zn(2+): Asp74, His93, and His95. Catalysis depends on Asp118, which acts as the Proton donor/acceptor. His167 contacts Zn(2+). Tyr225 (proton donor/acceptor) is an active-site residue.

This sequence belongs to the aldolase class II family. AraD/FucA subfamily. The cofactor is Zn(2+).

It catalyses the reaction L-ribulose 5-phosphate = D-xylulose 5-phosphate. It participates in cofactor degradation; L-ascorbate degradation; D-xylulose 5-phosphate from L-ascorbate: step 4/4. Catalyzes the isomerization of L-ribulose 5-phosphate to D-xylulose 5-phosphate. Is involved in the anaerobic L-ascorbate utilization. This is L-ribulose-5-phosphate 4-epimerase UlaF from Shigella boydii serotype 18 (strain CDC 3083-94 / BS512).